The chain runs to 190 residues: FUN14 domain-containing protein 2 (190 aa).

A compositionally biased stretch (polar residues) spans 1–13 (METSTQRTGSHLA). A disordered region spans residues 1-31 (METSTQRTGSHLAQTAAARHSASSRGEAARV). Residues 1-81 (METSTQRTGS…GQESGPSAEK (81 aa)) lie on the Cytoplasmic side of the membrane. S10 and S54 each carry phosphoserine. Residues 82–102 (YSVATQLLIGGVTGWCTGFIF) traverse the membrane as a helical segment. At 103 to 108 (QKVGKL) the chain is on the mitochondrial intermembrane side. The helical transmembrane segment at 109–129 (AATAVGGGFFLLQLANHTGYI) threads the bilayer. Residues 130–165 (KVDWQRVEKDMKKAKEQLKIRKSNQIPTEVKSKAEE) lie on the Cytoplasmic side of the membrane. S152 is modified (phosphoserine). Residues 166-186 (VVSFVKKNVLVTGGFFGGFLL) form a helical membrane-spanning segment. The Mitochondrial intermembrane segment spans residues 187-190 (GMAS).

Belongs to the FUN14 family.

It is found in the mitochondrion outer membrane. The protein resides in the nucleus. Functionally, binds directly and specifically 1,2-Diacyl-sn-glycero-3-phospho-(1'-myo-inositol-3',4',5'-bisphosphate) (PIP3) leading to the recruitment of PIP3 to mitochondria and may play a role in the regulation of the platelet activation via AKT/GSK3B/cGMP signaling pathways. May act as transcription factor that regulates SREBP1 (isoform SREBP-1C) expression in order to modulate triglyceride (TG) homeostasis in hepatocytes. This Bos taurus (Bovine) protein is FUN14 domain-containing protein 2.